A 144-amino-acid polypeptide reads, in one-letter code: Cytochrome c oxidase subunit 4 isoform 1, mitochondrial (144 aa).

Over 1–73 (SVVKSEDFSL…SFAEMNRGSN (73 aa)) the chain is Mitochondrial matrix. The residue at position 4 (Lys4) is an N6-acetyllysine; alternate. Lys4 carries the post-translational modification N6-succinyllysine; alternate. Lys28 carries the N6-acetyllysine modification. A phosphoserine mark is found at Ser31 and Ser33. Lys35 carries the N6-acetyllysine; alternate modification. Position 35 is an N6-succinyllysine; alternate (Lys35). The residue at position 42 (Lys42) is an N6-acetyllysine. The chain crosses the membrane as a helical span at residues 74 to 99 (EWKTVVGGAMFFIGFTALVIMWQKHY). Residues 100–144 (VYGPLPQSFDKEWVAKQTKRMLDMKVNPIQGLASKWDYEKNEWKK) are Mitochondrial intermembrane-facing.

Belongs to the cytochrome c oxidase IV family. As to quaternary structure, component of the cytochrome c oxidase (complex IV, CIV), a multisubunit enzyme composed of 14 subunits. The complex is composed of a catalytic core of 3 subunits MT-CO1, MT-CO2 and MT-CO3, encoded in the mitochondrial DNA, and 11 supernumerary subunits COX4I, COX5A, COX5B, COX6A, COX6B, COX6C, COX7A, COX7B, COX7C, COX8 and NDUFA4, which are encoded in the nuclear genome. The complex exists as a monomer or a dimer and forms supercomplexes (SCs) in the inner mitochondrial membrane with NADH-ubiquinone oxidoreductase (complex I, CI) and ubiquinol-cytochrome c oxidoreductase (cytochrome b-c1 complex, complex III, CIII), resulting in different assemblies (supercomplex SCI(1)III(2)IV(1) and megacomplex MCI(2)III(2)IV(2)). Interacts with PHB2; the interaction decreases in absence of SPHK2. Interacts with AFG1L. Interacts with ABCB7; this interaction allows the regulation of cellular iron homeostasis and cellular reactive oxygen species (ROS) levels in cardiomyocytes. Interacts with FLVCR2; this interaction occurs in the absence of heme and is disrupted upon heme binding. Interacts with IRGC.

The protein localises to the mitochondrion inner membrane. The protein operates within energy metabolism; oxidative phosphorylation. Its function is as follows. Component of the cytochrome c oxidase, the last enzyme in the mitochondrial electron transport chain which drives oxidative phosphorylation. The respiratory chain contains 3 multisubunit complexes succinate dehydrogenase (complex II, CII), ubiquinol-cytochrome c oxidoreductase (cytochrome b-c1 complex, complex III, CIII) and cytochrome c oxidase (complex IV, CIV), that cooperate to transfer electrons derived from NADH and succinate to molecular oxygen, creating an electrochemical gradient over the inner membrane that drives transmembrane transport and the ATP synthase. Cytochrome c oxidase is the component of the respiratory chain that catalyzes the reduction of oxygen to water. Electrons originating from reduced cytochrome c in the intermembrane space (IMS) are transferred via the dinuclear copper A center (CU(A)) of subunit 2 and heme A of subunit 1 to the active site in subunit 1, a binuclear center (BNC) formed by heme A3 and copper B (CU(B)). The BNC reduces molecular oxygen to 2 water molecules using 4 electrons from cytochrome c in the IMS and 4 protons from the mitochondrial matrix. This is Cytochrome c oxidase subunit 4 isoform 1, mitochondrial (COX4I1) from Pan troglodytes (Chimpanzee).